The following is a 548-amino-acid chain: MKRPKLKKGSKRLSCHKRYKIQKKVREHNRKARKEAKKSGTRKQKKEISVPNNAPFKAEILQEAQRRRQQEEELKQNRKLERQKEVAKRRKLDEKKKKNSEKREKRDNKKNKGTKAAESAEVVSCRHVNKVLEQSDVVLEVLDARDPLGSRCAQAEEAVLKSPNKRLLLLLNKADLVPRDVLEKWLQVLTAELPTVPFRCLPQAPSKSPGKKHKVPNTADLCTENRCPGGQVLLRILHSLCPSQSDAIKVGVIGFANVGKSSVINSLKQSHVCNVGPTKGTTRVLQEVRLDPQIRMLDSPALVVSPQNAPLAVMLRSVSDCNVDVLAAVSAILKHCSKQELMLHYTLPDYRNSLECVTLLAQRRGLLKKGGVPDTEAAGRLLFNDWMGVRMKYYCQPPDSPGVQPHITKEVTAAMSSGICSEQLAQDNASTLKALKCPSPANLVVFTSVGPTGAIMDERQLVEPEPIEEELEANDGEEDVEEEHEGSEEEEDEEVEQEVVSAKEQEVVSAKEQEVVSAKEQDSKSAGPSVSFDQAQEDDAYDFNTDFV.

Residues 1–45 (MKRPKLKKGSKRLSCHKRYKIQKKVREHNRKARKEAKKSGTRKQK) are compositionally biased toward basic residues. The segment at 1–118 (MKRPKLKKGS…KKNKGTKAAE (118 aa)) is disordered. The stretch at 58–114 (AEILQEAQRRRQQEEELKQNRKLERQKEVAKRRKLDEKKKKNSEKREKRDNKKNKGT) forms a coiled coil. The segment covering 64-107 (AQRRRQQEEELKQNRKLERQKEVAKRRKLDEKKKKNSEKREKRD) has biased composition (basic and acidic residues). One can recognise a CP-type G domain in the interval 125 to 305 (CRHVNKVLEQ…MLDSPALVVS (181 aa)). GTP-binding positions include 172 to 175 (NKAD), 256 to 263 (ANVGKSSV), and 298 to 301 (DSPA). The interval 459 to 548 (RQLVEPEPIE…DAYDFNTDFV (90 aa)) is disordered. Acidic residues predominate over residues 465–497 (EPIEEELEANDGEEDVEEEHEGSEEEEDEEVEQ). Positions 501 to 523 (SAKEQEVVSAKEQEVVSAKEQDS) are enriched in basic and acidic residues. Over residues 524–534 (KSAGPSVSFDQ) the composition is skewed to polar residues.

Belongs to the TRAFAC class YlqF/YawG GTPase family.

The protein localises to the nucleus. The protein resides in the nucleolus. May play a role in regulating cellular proliferation. In Xenopus tropicalis (Western clawed frog), this protein is Guanine nucleotide-binding protein-like 3 (gnl3).